A 528-amino-acid chain; its full sequence is Phosphoenolpyruvate carboxykinase (ATP) (528 aa).

Residues arginine 56, tyrosine 192, and lysine 198 each coordinate substrate. Residues lysine 198, histidine 217, and 233–241 (GLSGTGKTT) contribute to the ATP site. Positions 198 and 217 each coordinate Mn(2+). Aspartate 254 is a binding site for Mn(2+). 3 residues coordinate ATP: glutamate 282, arginine 319, and threonine 444. Arginine 319 is a binding site for substrate.

Belongs to the phosphoenolpyruvate carboxykinase (ATP) family. Requires Mn(2+) as cofactor.

It localises to the cytoplasm. The catalysed reaction is oxaloacetate + ATP = phosphoenolpyruvate + ADP + CO2. It functions in the pathway carbohydrate biosynthesis; gluconeogenesis. In terms of biological role, involved in the gluconeogenesis. Catalyzes the conversion of oxaloacetate (OAA) to phosphoenolpyruvate (PEP) through direct phosphoryl transfer between the nucleoside triphosphate and OAA. The protein is Phosphoenolpyruvate carboxykinase (ATP) of Bacillus cereus (strain B4264).